A 421-amino-acid polypeptide reads, in one-letter code: Gamma-glutamyl phosphate reductase (421 aa).

It belongs to the gamma-glutamyl phosphate reductase family.

The protein resides in the cytoplasm. The catalysed reaction is L-glutamate 5-semialdehyde + phosphate + NADP(+) = L-glutamyl 5-phosphate + NADPH + H(+). Its pathway is amino-acid biosynthesis; L-proline biosynthesis; L-glutamate 5-semialdehyde from L-glutamate: step 2/2. Its function is as follows. Catalyzes the NADPH-dependent reduction of L-glutamate 5-phosphate into L-glutamate 5-semialdehyde and phosphate. The product spontaneously undergoes cyclization to form 1-pyrroline-5-carboxylate. The sequence is that of Gamma-glutamyl phosphate reductase from Pseudomonas paraeruginosa (strain DSM 24068 / PA7) (Pseudomonas aeruginosa (strain PA7)).